We begin with the raw amino-acid sequence, 225 residues long: DnaA regulatory inactivator Hda (225 aa).

This sequence belongs to the DnaA family. HdA subfamily. In terms of assembly, the active form seems to be an ADP-bound monomer. Forms the RIDA complex (regulatory inactivation of DnaA) of ATP-DnaA, ADP-Hda and the DNA-loaded beta sliding clamp (dnaN).

In terms of biological role, mediates the interaction of DNA replication initiator protein DnaA with DNA polymerase subunit beta sliding clamp (dnaN). Stimulates hydrolysis of ATP-DnaA to ADP-DnaA, rendering DnaA inactive for reinitiation, a process called regulatory inhibition of DnaA or RIDA. This is DnaA regulatory inactivator Hda from Klebsiella pneumoniae (strain 342).